A 150-amino-acid chain; its full sequence is Large ribosomal subunit protein uL11 (150 aa).

Belongs to the universal ribosomal protein uL11 family. Part of the ribosomal stalk of the 50S ribosomal subunit. Interacts with L10 and the large rRNA to form the base of the stalk. L10 forms an elongated spine to which L12 dimers bind in a sequential fashion forming a multimeric L10(L12)X complex. In terms of processing, one or more lysine residues are methylated.

In terms of biological role, forms part of the ribosomal stalk which helps the ribosome interact with GTP-bound translation factors. The chain is Large ribosomal subunit protein uL11 from Ureaplasma urealyticum serovar 10 (strain ATCC 33699 / Western).